The primary structure comprises 899 residues: Proline-rich transmembrane protein 4 (899 aa).

Residues 1 to 23 (MARHGCLGLGLFCCVLFAATVGP) form the signal peptide. Disordered stretches follow at residues 110-152 (LTEW…RRST) and 295-340 (TVPI…PEAP). Helical transmembrane passes span 370-390 (VGAL…LLPW), 392-412 (CPPG…AGTT), 430-450 (ALAW…GLGL), 467-487 (LAAL…GSAA), and 500-520 (GLHA…SCWG). Phosphoserine is present on serine 641. 2 disordered regions span residues 769 to 797 (TGGR…AWPA) and 839 to 869 (PSGS…ASEL). Positions 840–851 (SGSSPSLPASGS) are enriched in low complexity.

It localises to the membrane. This Homo sapiens (Human) protein is Proline-rich transmembrane protein 4 (PRRT4).